The following is a 163-amino-acid chain: Arginine repressor (163 aa).

Belongs to the ArgR family.

It localises to the cytoplasm. It functions in the pathway amino-acid biosynthesis; L-arginine biosynthesis [regulation]. Its function is as follows. Regulates arginine biosynthesis genes. This Corynebacterium diphtheriae (strain ATCC 700971 / NCTC 13129 / Biotype gravis) protein is Arginine repressor.